The primary structure comprises 351 residues: Photosystem II D2 protein (351 aa).

A helical transmembrane segment spans residues 39–59; it reads CAYLAVGGWLTGTTFVTSWYT. Chlorophyll a is bound at residue histidine 116. Residues 123 to 139 traverse the membrane as a helical segment; the sequence is GFCLRQFEIARLVGLRP. Pheophytin a is bound by residues glutamine 128 and asparagine 141. A helical membrane pass occupies residues 151–164; the sequence is VFVSVFLMYPLGQA. Residue histidine 196 participates in chlorophyll a binding. Residues 206–226 form a helical membrane-spanning segment; that stretch reads GALLCAIHGATVQNTLFEDGD. Histidine 213 and phenylalanine 260 together coordinate a plastoquinone. Histidine 213 contributes to the Fe cation binding site. Residue histidine 267 participates in Fe cation binding. Residues 277-293 form a helical membrane-spanning segment; sequence GLWTSAFGIVGLALNLR.

It belongs to the reaction center PufL/M/PsbA/D family. As to quaternary structure, PSII is composed of 1 copy each of membrane proteins PsbA, PsbB, PsbC, PsbD, PsbE, PsbF, PsbH, PsbI, PsbJ, PsbK, PsbL, PsbM, PsbT, PsbX, PsbY, PsbZ, Psb30/Ycf12, at least 3 peripheral proteins of the oxygen-evolving complex and a large number of cofactors. It forms dimeric complexes. Requires The D1/D2 heterodimer binds P680, chlorophylls that are the primary electron donor of PSII, and subsequent electron acceptors. It shares a non-heme iron and each subunit binds pheophytin, quinone, additional chlorophylls, carotenoids and lipids. There is also a Cl(-1) ion associated with D1 and D2, which is required for oxygen evolution. The PSII complex binds additional chlorophylls, carotenoids and specific lipids. as cofactor.

Its subcellular location is the plastid. The protein localises to the chloroplast thylakoid membrane. The enzyme catalyses 2 a plastoquinone + 4 hnu + 2 H2O = 2 a plastoquinol + O2. Photosystem II (PSII) is a light-driven water:plastoquinone oxidoreductase that uses light energy to abstract electrons from H(2)O, generating O(2) and a proton gradient subsequently used for ATP formation. It consists of a core antenna complex that captures photons, and an electron transfer chain that converts photonic excitation into a charge separation. The D1/D2 (PsbA/PsbD) reaction center heterodimer binds P680, the primary electron donor of PSII as well as several subsequent electron acceptors. D2 is needed for assembly of a stable PSII complex. In Porphyra purpurea (Red seaweed), this protein is Photosystem II D2 protein.